A 316-amino-acid polypeptide reads, in one-letter code: Tetrahydromethanopterin S-methyltransferase subunit H (316 aa).

Belongs to the MtrH family. As to quaternary structure, the complex is composed of 8 subunits; MtrA, MtrB, MtrC, MtrD, MtrE, MtrF, MtrG and MtrH.

It catalyses the reaction 5-methyl-5,6,7,8-tetrahydromethanopterin + coenzyme M + 2 Na(+)(in) = 5,6,7,8-tetrahydromethanopterin + methyl-coenzyme M + 2 Na(+)(out). Its pathway is one-carbon metabolism; methanogenesis from CO(2); methyl-coenzyme M from 5,10-methylene-5,6,7,8-tetrahydromethanopterin: step 2/2. Its function is as follows. Part of a complex that catalyzes the formation of methyl-coenzyme M and tetrahydromethanopterin from coenzyme M and methyl-tetrahydromethanopterin. This is an energy-conserving, sodium-ion translocating step. MtrH catalyzes the transfer of the methyl group from methyl-tetrahydromethanopterin to the corrinoid prosthetic group of MtrA. This is Tetrahydromethanopterin S-methyltransferase subunit H from Methanosarcina barkeri (strain Fusaro / DSM 804).